We begin with the raw amino-acid sequence, 739 residues long: Catalase-peroxidase (739 aa).

The interval 1–33 (MSVEHPPIGEANTEPAAGGCPVTGRLRHPLQGG) is disordered. The segment at residues 106 to 229 (WHSAGTYRSS…LAAVQMGLIY (124 aa)) is a cross-link (tryptophyl-tyrosyl-methioninium (Trp-Tyr) (with M-255)). Catalysis depends on H107, which acts as the Proton acceptor. Residues 113 to 134 (RSSDGRGGANTGQQRFAPLNSW) form a disordered region. Positions 229–255 (YVNPEGPNGNPDPLAAAVDIKDTFGRM) form a cross-link, tryptophyl-tyrosyl-methioninium (Tyr-Met) (with W-106). Residue H270 participates in heme b binding.

This sequence belongs to the peroxidase family. Peroxidase/catalase subfamily. Homodimer or homotetramer. The cofactor is heme b. In terms of processing, formation of the three residue Trp-Tyr-Met cross-link is important for the catalase, but not the peroxidase activity of the enzyme.

The catalysed reaction is H2O2 + AH2 = A + 2 H2O. It carries out the reaction 2 H2O2 = O2 + 2 H2O. Functionally, bifunctional enzyme with both catalase and broad-spectrum peroxidase activity. This Nocardia farcinica (strain IFM 10152) protein is Catalase-peroxidase.